The sequence spans 601 residues: Phosphomethylpyrimidine synthase (601 aa).

Disordered regions lie at residues 1–31 (MTNKDARTPASSQTGEALASPQGDQEAGKSI) and 100–141 (AGRP…RDGQ). Over residues 100-112 (AGRPVRPEDDGIK) the composition is skewed to basic and acidic residues. Residues asparagine 208, methionine 237, tyrosine 266, histidine 302, 322–324 (SRG), 363–366 (DGLR), and glutamate 402 each bind substrate. Histidine 406 contributes to the Zn(2+) binding site. Tyrosine 429 serves as a coordination point for substrate. Residue histidine 470 coordinates Zn(2+). The [4Fe-4S] cluster site is built by cysteine 550, cysteine 553, and cysteine 558.

Belongs to the ThiC family. [4Fe-4S] cluster is required as a cofactor.

It catalyses the reaction 5-amino-1-(5-phospho-beta-D-ribosyl)imidazole + S-adenosyl-L-methionine = 4-amino-2-methyl-5-(phosphooxymethyl)pyrimidine + CO + 5'-deoxyadenosine + formate + L-methionine + 3 H(+). Its pathway is cofactor biosynthesis; thiamine diphosphate biosynthesis. In terms of biological role, catalyzes the synthesis of the hydroxymethylpyrimidine phosphate (HMP-P) moiety of thiamine from aminoimidazole ribotide (AIR) in a radical S-adenosyl-L-methionine (SAM)-dependent reaction. The chain is Phosphomethylpyrimidine synthase from Streptomyces avermitilis (strain ATCC 31267 / DSM 46492 / JCM 5070 / NBRC 14893 / NCIMB 12804 / NRRL 8165 / MA-4680).